We begin with the raw amino-acid sequence, 912 residues long: Coiled-coil domain-containing protein 162 (912 aa).

2 coiled-coil regions span residues 1–35 (MFKS…FSFA) and 220–276 (VLLG…VVMS).

This chain is Coiled-coil domain-containing protein 162, found in Mus musculus (Mouse).